The following is a 444-amino-acid chain: Homogentisate 1,2-dioxygenase (444 aa).

His-298 acts as the Proton acceptor in catalysis. Residues His-341 and Glu-347 each contribute to the Fe cation site. Homogentisate is bound by residues Tyr-356 and His-377. His-377 lines the Fe cation pocket.

It belongs to the homogentisate dioxygenase family. Hexamer; dimer of trimers. Requires Fe cation as cofactor.

It catalyses the reaction homogentisate + O2 = 4-maleylacetoacetate + H(+). The protein operates within amino-acid degradation; L-phenylalanine degradation; acetoacetate and fumarate from L-phenylalanine: step 4/6. Its function is as follows. Involved in the catabolism of homogentisate (2,5-dihydroxyphenylacetate or 2,5-OH-PhAc), a central intermediate in the degradation of phenylalanine and tyrosine. Catalyzes the oxidative ring cleavage of the aromatic ring of homogentisate to yield maleylacetoacetate. The chain is Homogentisate 1,2-dioxygenase from Burkholderia ambifaria (strain MC40-6).